A 552-amino-acid polypeptide reads, in one-letter code: Probable acyl-activating enzyme 5, peroxisomal (552 aa).

The short motif at serine 550–methionine 552 is the Microbody targeting signal element.

It belongs to the ATP-dependent AMP-binding enzyme family. In terms of tissue distribution, expressed in roots, stems and developing seeds.

The protein resides in the peroxisome. In terms of biological role, may act as an acid--thiol ligase that activates carboxylic acids by forming acyl-CoAs. The chain is Probable acyl-activating enzyme 5, peroxisomal (AAE5) from Arabidopsis thaliana (Mouse-ear cress).